The following is a 1059-amino-acid chain: Nonsense-mediated mRNA decay factor SMG7 (1059 aa).

2 TPR repeats span residues 149-183 (DQQS…LGDL) and 184-217 (ARYK…WPAS). A compositionally biased stretch (polar residues) spans 806 to 817 (SHVSPAHSQSTS). Disordered stretches follow at residues 806–826 (SHVS…KWSP), 927–955 (HLGP…SGNN), 987–1015 (SGKP…QVPT), and 1040–1059 (STQL…RHFV).

As to quaternary structure, interacts with EXA1. In terms of tissue distribution, expressed in flowers and at lower levels in stems and leaves.

Its subcellular location is the cytoplasm. It localises to the P-body. Plays multiple roles in growth and development. Involved in nonsense-mediated mRNA decay (NMD). May provide a link to the mRNA degradation machinery to initiate NMD and serve as an adapter for UPF proteins function. Required for meiotic progression through anaphase II of pollen mother cells. May counteract cyclin-dependent kinase (CDK) activity at the end of meiosis. May play a role in plant defense through its involvement in NMD. Together with EXA1, helps to restrict cell death induction during pathogen infection in a salicylic acid- (SA) and reactive oxygen species- (ROS) independent manner. The sequence is that of Nonsense-mediated mRNA decay factor SMG7 from Arabidopsis thaliana (Mouse-ear cress).